Here is a 202-residue protein sequence, read N- to C-terminus: uncharacterized protein (202 aa).

This is an uncharacterized protein from Homo sapiens (Human).